A 379-amino-acid polypeptide reads, in one-letter code: 1-deoxy-D-xylulose 5-phosphate reductoisomerase (379 aa).

NADPH is bound by residues T10, G11, S12, I13, R38, N39, and N121. Residue K122 participates in 1-deoxy-D-xylulose 5-phosphate binding. Residue E123 participates in NADPH binding. Residue D147 participates in Mn(2+) binding. Residues S148, E149, S173, and H196 each contribute to the 1-deoxy-D-xylulose 5-phosphate site. A Mn(2+)-binding site is contributed by E149. G202 contacts NADPH. Residues S209, N214, K215, and E218 each contribute to the 1-deoxy-D-xylulose 5-phosphate site. E218 serves as a coordination point for Mn(2+).

The protein belongs to the DXR family. Requires Mg(2+) as cofactor. Mn(2+) is required as a cofactor.

It catalyses the reaction 2-C-methyl-D-erythritol 4-phosphate + NADP(+) = 1-deoxy-D-xylulose 5-phosphate + NADPH + H(+). It participates in isoprenoid biosynthesis; isopentenyl diphosphate biosynthesis via DXP pathway; isopentenyl diphosphate from 1-deoxy-D-xylulose 5-phosphate: step 1/6. Catalyzes the NADPH-dependent rearrangement and reduction of 1-deoxy-D-xylulose-5-phosphate (DXP) to 2-C-methyl-D-erythritol 4-phosphate (MEP). This Chlamydia muridarum (strain MoPn / Nigg) protein is 1-deoxy-D-xylulose 5-phosphate reductoisomerase.